The following is a 375-amino-acid chain: Protein RecA (375 aa).

Position 75 to 82 (75 to 82 (GPESSGKT)) interacts with ATP. A disordered region spans residues 339–375 (GPYAKMKDEQTEEAAGDQMDEDKPIDLSPNFDDDDAN). Over residues 348 to 358 (QTEEAAGDQMD) the composition is skewed to acidic residues.

This sequence belongs to the RecA family.

Its subcellular location is the cytoplasm. Functionally, can catalyze the hydrolysis of ATP in the presence of single-stranded DNA, the ATP-dependent uptake of single-stranded DNA by duplex DNA, and the ATP-dependent hybridization of homologous single-stranded DNAs. It interacts with LexA causing its activation and leading to its autocatalytic cleavage. The polypeptide is Protein RecA (Corynebacterium jeikeium (strain K411)).